We begin with the raw amino-acid sequence, 138 residues long: Thyrotropin subunit beta (138 aa).

An N-terminal signal peptide occupies residues 1-20; it reads MTAIFLMSMVFGLACGQTMS. 6 disulfides stabilise this stretch: Cys-22-Cys-72, Cys-36-Cys-87, Cys-39-Cys-125, Cys-47-Cys-103, Cys-51-Cys-105, and Cys-108-Cys-115. Residue Asn-43 is glycosylated (N-linked (GlcNAc...) asparagine). Positions 133 to 138 are excised as a propeptide; it reads VVEFSI.

Belongs to the glycoprotein hormones subunit beta family. In terms of assembly, heterodimer of a common alpha chain and a unique beta chain which confers biological specificity to thyrotropin, lutropin, follitropin and gonadotropin.

The protein resides in the secreted. Functionally, indispensable for the control of thyroid structure and metabolism. The polypeptide is Thyrotropin subunit beta (TSHB) (Equus caballus (Horse)).